Here is a 289-residue protein sequence, read N- to C-terminus: ATP synthase subunit a (289 aa).

6 consecutive transmembrane segments (helical) span residues 43–63 (AFHL…LLIF), 103–123 (VIAP…AVDL), 160–180 (FCVF…GGFI), 193–213 (IFVQ…TLIA), 232–252 (VFIL…GLGV), and 259–279 (AVFH…LTIV).

Belongs to the ATPase A chain family. In terms of assembly, F-type ATPases have 2 components, CF(1) - the catalytic core - and CF(0) - the membrane proton channel. CF(1) has five subunits: alpha(3), beta(3), gamma(1), delta(1), epsilon(1). CF(0) has three main subunits: a(1), b(2) and c(9-12). The alpha and beta chains form an alternating ring which encloses part of the gamma chain. CF(1) is attached to CF(0) by a central stalk formed by the gamma and epsilon chains, while a peripheral stalk is formed by the delta and b chains.

Its subcellular location is the cell inner membrane. Key component of the proton channel; it plays a direct role in the translocation of protons across the membrane. The chain is ATP synthase subunit a from Pseudomonas putida (strain ATCC 700007 / DSM 6899 / JCM 31910 / BCRC 17059 / LMG 24140 / F1).